Consider the following 1446-residue polypeptide: E3 ubiquitin-protein ligase listerin (1446 aa).

11 HEAT repeats span residues 71–108, 115–153, 324–361, 363–399, 413–450, 630–669, 684–721, 1046–1083, 1107–1144, 1165–1202, and 1251–1289; these read QTREKGLKELMELINTENSSIESSYEHFCGLVAQLTTD, MLTMKVISQFLTKLKKSASKGLKKIIPFVLFAKSDVTNG, SLQKGIYPRLLNLIRKKGNHWRVLKHYLLPAVSVLLQK, ENPALITSIITSFTDNLPWQAEASMNAIHCWFCTFSD, EILKDLSPLIVEMSNQSMHFNTAEATECISGLIHWIIE, AENVDFLISLLQSLDSKEDPEERKNLVLKLLSALFDAEDE, GDFEQFFEKLFANMEEEDAERVLEIAARFDKLVGFCDA, LRALFVISEFPTSFSNDDDVANQEFIPELSVFKYPAFQ, SVARLLMPIMFKLENAAALKSNEDSELPVSTNRRKLSL, LLDLTLLPLENTKDSGFSQEHRVAYCDVIDPFFKNALN, and FKSMTLLPAAIRLFYKGMPNCFMPMFQETVTKYASRLLI. Residues 1395 to 1442 form an RING-type zinc finger; that stretch reads CTICMMTVHQQTHQLPKIKCKQCKNKFHSNCLYKWFESSNQSTCPLCR.

The protein belongs to the LTN1 family. In terms of assembly, component of the ribosome quality control complex (RQC), composed of at least the E3 ubiquitin ligase ltn1 and nemf. The complex probably also contains tcf25 as well as vcp/p97 and its ubiquitin-binding cofactors. RQC forms a stable complex with 60S ribosomal subunits.

The protein resides in the cytoplasm. The protein localises to the cytosol. The enzyme catalyses S-ubiquitinyl-[E2 ubiquitin-conjugating enzyme]-L-cysteine + [acceptor protein]-L-lysine = [E2 ubiquitin-conjugating enzyme]-L-cysteine + N(6)-ubiquitinyl-[acceptor protein]-L-lysine.. Its pathway is protein modification; protein ubiquitination. Functionally, E3 ubiquitin-protein ligase. Component of the ribosome quality control complex (RQC), a ribosome-associated complex that mediates ubiquitination and extraction of incompletely synthesized nascent chains for proteasomal degradation. Ubiquitination leads to vcp/p97 recruitment for extraction and degradation of the incomplete translation product. The chain is E3 ubiquitin-protein ligase listerin from Caenorhabditis elegans.